The sequence spans 384 residues: Lipid-A-disaccharide synthase 1 (384 aa).

It belongs to the LpxB family.

The catalysed reaction is a lipid X + a UDP-2-N,3-O-bis[(3R)-3-hydroxyacyl]-alpha-D-glucosamine = a lipid A disaccharide + UDP + H(+). Its pathway is bacterial outer membrane biogenesis; LPS lipid A biosynthesis. Condensation of UDP-2,3-diacylglucosamine and 2,3-diacylglucosamine-1-phosphate to form lipid A disaccharide, a precursor of lipid A, a phosphorylated glycolipid that anchors the lipopolysaccharide to the outer membrane of the cell. This chain is Lipid-A-disaccharide synthase 1, found in Legionella pneumophila (strain Paris).